The following is a 326-amino-acid chain: NDRG-like protein (326 aa).

Belongs to the NDRG family.

The chain is NDRG-like protein from Dictyostelium discoideum (Social amoeba).